We begin with the raw amino-acid sequence, 537 residues long: Glutamyl-tRNA(Gln) amidotransferase subunit A, chloroplastic/mitochondrial (537 aa).

Catalysis depends on charge relay system residues lysine 116 and serine 191. Residue serine 215 is the Acyl-ester intermediate of the active site.

The protein belongs to the amidase family. GatA subfamily. As to quaternary structure, subunit of the heterotrimeric GatCAB amidotransferase (AdT) complex, composed of A, B and C subunits.

The protein localises to the mitochondrion. It is found in the plastid. It localises to the chloroplast stroma. The catalysed reaction is L-glutamyl-tRNA(Gln) + L-glutamine + ATP + H2O = L-glutaminyl-tRNA(Gln) + L-glutamate + ADP + phosphate + H(+). Its function is as follows. Allows the formation of correctly charged Gln-tRNA(Gln) through the transamidation of misacylated Glu-tRNA(Gln) in chloroplasts and mitochondria. The reaction takes place in the presence of glutamine and ATP through an activated gamma-phospho-Glu-tRNA(Gln). The chain is Glutamyl-tRNA(Gln) amidotransferase subunit A, chloroplastic/mitochondrial from Arabidopsis thaliana (Mouse-ear cress).